A 240-amino-acid chain; its full sequence is tRNA1(Val) (adenine(37)-N6)-methyltransferase (240 aa).

This sequence belongs to the methyltransferase superfamily. tRNA (adenine-N(6)-)-methyltransferase family.

It localises to the cytoplasm. It carries out the reaction adenosine(37) in tRNA1(Val) + S-adenosyl-L-methionine = N(6)-methyladenosine(37) in tRNA1(Val) + S-adenosyl-L-homocysteine + H(+). Specifically methylates the adenine in position 37 of tRNA(1)(Val) (anticodon cmo5UAC). In Vibrio cholerae serotype O1 (strain ATCC 39315 / El Tor Inaba N16961), this protein is tRNA1(Val) (adenine(37)-N6)-methyltransferase.